The sequence spans 331 residues: Mitochondrial respiration co-chaperone MRJ1 (331 aa).

The N-terminal 36 residues, 1–36 (MLSFQATVRPLAVSSRLHSPAAHIWRRNAHTAAMSD), are a transit peptide targeting the mitochondrion. The interval 35–66 (SDDSLDQGSSSSYGDSASQPHLGKGKGRQDSL) is disordered. The segment covering 40–53 (DQGSSSSYGDSASQ) has biased composition (low complexity). The region spanning 83 to 147 (DPFEVMALDR…SSRSAFLKTG (65 aa)) is the J domain. Residues 203–226 (DGSQGWRPYEDPSKGFSPPTSGPA) are disordered. Residues 275-303 (RALAQARYEAATHGHIRREQIRRRVREAE) enclose the IQ domain.

The protein belongs to the DnaJ family. In terms of assembly, interacts with QCR2.

The protein localises to the mitochondrion. Its function is as follows. Mitochondrial co-chaperone required for ubiquinol-cytochrome c oxidoreductase (mitochondrial respiratory chain complex III) activity. The sequence is that of Mitochondrial respiration co-chaperone MRJ1 from Cryptococcus neoformans var. grubii serotype A (strain H99 / ATCC 208821 / CBS 10515 / FGSC 9487) (Filobasidiella neoformans var. grubii).